The following is a 311-amino-acid chain: Pyrimidine-specific ribonucleoside hydrolase RihA (311 aa).

Residue histidine 240 is part of the active site.

Belongs to the IUNH family. RihA subfamily.

Hydrolyzes with equal efficiency cytidine or uridine to ribose and cytosine or uracil, respectively. This chain is Pyrimidine-specific ribonucleoside hydrolase RihA, found in Escherichia coli (strain ATCC 8739 / DSM 1576 / NBRC 3972 / NCIMB 8545 / WDCM 00012 / Crooks).